We begin with the raw amino-acid sequence, 555 residues long: MNTSLFKQERQKYIPKLPNILKKDFNNISLVYGENTEAIQDRQALKEFFKNTYGLPIISFTEGESSLSFSKALNIGIILSGGPAPGGHNVISGVFDAIKKFNPNSKLFGFKGGPLGLLENDKIELTESLINSYRNTGGFDIVSSGRTKIETEEHYNKALFVAKENNLNAIIIIGGDDSNTNAAILAEYFKKNGENIQVIGVPKTIDADLRNDHIEISFGFDSATKIYSELIGNLCRDAMSTKKYWHFVKLMGRSASHVALECALKTHPNICIVSEEVLAKKKTLSEIIDEMVSVILKRSLNGDNFGVVIVPEGLIEFIPEVKSLMLELCDIFDKNEGEFKGLNIEKMKEIFVAKLSDYMKGVYLSLPLFIQFELIKSILERDPHGNFNVSRVPTEKLFIEMIQSRLNDMKKRGEYKGSFTPVDHFFGYEGRSAFPSNFDSDYCYSLGYNAVVLILNGLTGYMSCIKNLNLKPTDWIAGGVPLTMLMNMEERYGEKKPVIKKALVDLEGRPFKEFVKNRDKWALNNLYLYPGPVQYFGSSEIVDEITETLKLELLK.

Gly-82 is a diphosphate binding site. Arg-146 is a substrate binding site. Position 176 (Asp-176) interacts with Mg(2+). Substrate is bound by residues 204–206 (TID), 243–244 (KY), 251–253 (MGR), Glu-312, and 428–431 (YEGR). Asp-206 functions as the Proton acceptor in the catalytic mechanism.

It belongs to the phosphofructokinase type A (PFKA) family. PPi-dependent PFK group II subfamily. Clade 'Long' sub-subfamily. In terms of assembly, homodimer. The cofactor is Mg(2+).

It is found in the cytoplasm. It catalyses the reaction beta-D-fructose 6-phosphate + diphosphate = beta-D-fructose 1,6-bisphosphate + phosphate + H(+). The protein operates within carbohydrate degradation; glycolysis; D-glyceraldehyde 3-phosphate and glycerone phosphate from D-glucose: step 3/4. Its activity is regulated as follows. Non-allosteric. Its function is as follows. Catalyzes the phosphorylation of D-fructose 6-phosphate, the first committing step of glycolysis. Uses inorganic phosphate (PPi) as phosphoryl donor instead of ATP like common ATP-dependent phosphofructokinases (ATP-PFKs), which renders the reaction reversible, and can thus function both in glycolysis and gluconeogenesis. Consistently, PPi-PFK can replace the enzymes of both the forward (ATP-PFK) and reverse (fructose-bisphosphatase (FBPase)) reactions. The chain is Pyrophosphate--fructose 6-phosphate 1-phosphotransferase from Borreliella burgdorferi (strain ATCC 35210 / DSM 4680 / CIP 102532 / B31) (Borrelia burgdorferi).